We begin with the raw amino-acid sequence, 398 residues long: Acetate kinase (398 aa).

Asn8 is a Mg(2+) binding site. Residue Lys15 coordinates ATP. A substrate-binding site is contributed by Arg89. Asp146 serves as the catalytic Proton donor/acceptor. ATP is bound by residues 206 to 210 (HIGNG), 283 to 285 (DMR), and 331 to 335 (GMGEN). Glu383 contacts Mg(2+).

This sequence belongs to the acetokinase family. In terms of assembly, homodimer. Requires Mg(2+) as cofactor. Mn(2+) serves as cofactor.

The protein localises to the cytoplasm. It catalyses the reaction acetate + ATP = acetyl phosphate + ADP. The protein operates within metabolic intermediate biosynthesis; acetyl-CoA biosynthesis; acetyl-CoA from acetate: step 1/2. In terms of biological role, catalyzes the formation of acetyl phosphate from acetate and ATP. Can also catalyze the reverse reaction. This Streptococcus pyogenes serotype M6 (strain ATCC BAA-946 / MGAS10394) protein is Acetate kinase.